The following is a 91-amino-acid chain: Protein sigN139 (91 aa).

Residues asparagine 23 and asparagine 34 are each glycosylated (N-linked (GlcNAc...) asparagine). A helical transmembrane segment spans residues 46–68; sequence LLPVVAFISGTVTSITGLVAGAL.

It localises to the membrane. This Dictyostelium discoideum (Social amoeba) protein is Protein sigN139.